The chain runs to 1120 residues: Elongation factor-like GTPase 1 (1120 aa).

Residues 17 to 272 (ANIRNICVLA…LMKTLWGDYY (256 aa)) form the tr-type G domain. GTP is bound by residues 26–33 (AHVDHGKT), 92–96 (DSPGH), and 146–149 (NKID). The interval 430 to 496 (PRPLTQEEIA…VESMTPKPVL (67 aa)) is disordered. Basic and acidic residues-rich tracts occupy residues 438–452 (IAQR…HAEK) and 475–484 (PKGEEPRGDE). Lys528 carries the N6-acetyllysine modification. The tract at residues 907–930 (ASDLAKEGQEENETCSGGNENQEL) is disordered. The span at 920 to 930 (TCSGGNENQEL) shows a compositional bias: polar residues.

The protein belongs to the TRAFAC class translation factor GTPase superfamily. Classic translation factor GTPase family. Associates with the 60S ribosomal subunit. Found in a complex consisting of the 60S ribosomal subunit, SBDS and EFL1. Interacts with SBDS and binds to GTP and GDP; the interaction with SBDS decreases EFL1 affinity for GDP and facilitates GDP release. As to expression, expressed at low levels in brain. Expression is highly increased in glioma tissues.

The enzyme catalyses GTP + H2O = GDP + phosphate + H(+). Its activity is regulated as follows. GTPase activity is stimulated in the presence of 60S ribosome subunits. GTPase involved in the biogenesis of the 60S ribosomal subunit and translational activation of ribosomes. Together with SBDS, triggers the GTP-dependent release of EIF6 from 60S pre-ribosomes in the cytoplasm, thereby activating ribosomes for translation competence by allowing 80S ribosome assembly and facilitating EIF6 recycling to the nucleus, where it is required for 60S rRNA processing and nuclear export. In Homo sapiens (Human), this protein is Elongation factor-like GTPase 1.